Here is a 173-residue protein sequence, read N- to C-terminus: Endosomal/vacuolar adapter protein YPT35 (173 aa).

The PX domain maps to 40–173; that stretch reads ERAFVTNCTI…LVIQFLRPRK (134 aa).

This sequence belongs to the YPT35 family.

It is found in the endosome membrane. The protein localises to the vacuole membrane. Recruits the lipid transfer protein VPS13 to endosomal and vacuolar membranes. This chain is Endosomal/vacuolar adapter protein YPT35 (YPT35), found in Candida glabrata (strain ATCC 2001 / BCRC 20586 / JCM 3761 / NBRC 0622 / NRRL Y-65 / CBS 138) (Yeast).